A 136-amino-acid chain; its full sequence is NADH-ubiquinone oxidoreductase chain 3 (136 aa).

Transmembrane regions (helical) follow at residues 5–25 (TFFL…NLIF), 55–75 (ISFF…LLVY), and 85–105 (GIYG…GFAF).

Belongs to the complex I subunit 3 family.

The protein resides in the mitochondrion membrane. The enzyme catalyses a ubiquinone + NADH + 5 H(+)(in) = a ubiquinol + NAD(+) + 4 H(+)(out). Its function is as follows. Core subunit of the mitochondrial membrane respiratory chain NADH dehydrogenase (Complex I) that is believed to belong to the minimal assembly required for catalysis. Complex I functions in the transfer of electrons from NADH to the respiratory chain. The immediate electron acceptor for the enzyme is believed to be ubiquinone. The protein is NADH-ubiquinone oxidoreductase chain 3 (nd3) of Emericella nidulans (Aspergillus nidulans).